A 241-amino-acid chain; its full sequence is Ribonuclease PH (241 aa).

Residues R86 and 124–126 contribute to the phosphate site; that span reads GTR.

The protein belongs to the RNase PH family. As to quaternary structure, homohexameric ring arranged as a trimer of dimers.

It catalyses the reaction tRNA(n+1) + phosphate = tRNA(n) + a ribonucleoside 5'-diphosphate. Phosphorolytic 3'-5' exoribonuclease that plays an important role in tRNA 3'-end maturation. Removes nucleotide residues following the 3'-CCA terminus of tRNAs; can also add nucleotides to the ends of RNA molecules by using nucleoside diphosphates as substrates, but this may not be physiologically important. Probably plays a role in initiation of 16S rRNA degradation (leading to ribosome degradation) during starvation. The polypeptide is Ribonuclease PH (Hamiltonella defensa subsp. Acyrthosiphon pisum (strain 5AT)).